A 228-amino-acid chain; its full sequence is Urease accessory protein UreF (228 aa).

This sequence belongs to the UreF family. In terms of assembly, ureD, UreF and UreG form a complex that acts as a GTP-hydrolysis-dependent molecular chaperone, activating the urease apoprotein by helping to assemble the nickel containing metallocenter of UreC. The UreE protein probably delivers the nickel.

The protein resides in the cytoplasm. Its function is as follows. Required for maturation of urease via the functional incorporation of the urease nickel metallocenter. This Photorhabdus laumondii subsp. laumondii (strain DSM 15139 / CIP 105565 / TT01) (Photorhabdus luminescens subsp. laumondii) protein is Urease accessory protein UreF.